A 1132-amino-acid chain; its full sequence is DNA-directed RNA polymerase I subunit RPA2 (1132 aa).

The C4-type zinc finger occupies 1067–1098; it reads CMDCGSLLSPLLEKPPPNWSATRHRKTICLLC.

The protein belongs to the RNA polymerase beta chain family. Component of the RNA polymerase I (Pol I) complex consisting of at least 13 subunits.

The protein resides in the nucleus. It localises to the nucleolus. It is found in the chromosome. It carries out the reaction RNA(n) + a ribonucleoside 5'-triphosphate = RNA(n+1) + diphosphate. In terms of biological role, DNA-dependent RNA polymerase catalyzes the transcription of DNA into RNA using the four ribonucleoside triphosphates as substrates. Second largest core component of RNA polymerase I which synthesizes ribosomal RNA precursors. Proposed to contribute to the polymerase catalytic activity and forms the polymerase active center together with the largest subunit. Pol I is composed of mobile elements and RPA2 is part of the core element with the central large cleft and probably a clamp element that moves to open and close the cleft. The sequence is that of DNA-directed RNA polymerase I subunit RPA2 (polr1b) from Danio rerio (Zebrafish).